Reading from the N-terminus, the 71-residue chain is Large ribosomal subunit protein bL31 (71 aa).

Positions 16, 18, 36, and 39 each coordinate Zn(2+).

Belongs to the bacterial ribosomal protein bL31 family. Type A subfamily. Part of the 50S ribosomal subunit. It depends on Zn(2+) as a cofactor.

Functionally, binds the 23S rRNA. In Thermotoga sp. (strain RQ2), this protein is Large ribosomal subunit protein bL31.